The chain runs to 466 residues: Ribulose bisphosphate carboxylase large chain (466 aa).

Residue Lys-4 is modified to N6,N6,N6-trimethyllysine. 2 residues coordinate substrate: Asn-113 and Thr-163. Lys-165 (proton acceptor) is an active-site residue. Lys-167 lines the substrate pocket. Residues Lys-191, Asp-193, and Glu-194 each contribute to the Mg(2+) site. Lys-191 bears the N6-carboxylysine mark. The Proton acceptor role is filled by His-284. Substrate is bound by residues Arg-285, His-317, and Ser-369.

The protein belongs to the RuBisCO large chain family. Type I subfamily. Heterohexadecamer of 8 large chains and 8 small chains; disulfide-linked. The disulfide link is formed within the large subunit homodimers. The cofactor is Mg(2+). The disulfide bond which can form in the large chain dimeric partners within the hexadecamer appears to be associated with oxidative stress and protein turnover.

The protein localises to the plastid. It localises to the chloroplast. The catalysed reaction is 2 (2R)-3-phosphoglycerate + 2 H(+) = D-ribulose 1,5-bisphosphate + CO2 + H2O. It catalyses the reaction D-ribulose 1,5-bisphosphate + O2 = 2-phosphoglycolate + (2R)-3-phosphoglycerate + 2 H(+). Its function is as follows. RuBisCO catalyzes two reactions: the carboxylation of D-ribulose 1,5-bisphosphate, the primary event in carbon dioxide fixation, as well as the oxidative fragmentation of the pentose substrate in the photorespiration process. Both reactions occur simultaneously and in competition at the same active site. The protein is Ribulose bisphosphate carboxylase large chain of Barleria prionitis (Porcupine flower).